We begin with the raw amino-acid sequence, 431 residues long: Protein translocase subunit SecY (431 aa).

A run of 10 helical transmembrane segments spans residues 18–38 (IIFTLLMLIVFRLGSFIPVPH), 64–84 (LFNFSILAMGIMPYITASIII), 116–136 (FTIVLGFIQALGMSYGFNNMA), 146–166 (VGTYLLIAIVLTAGTAFLMWL), 175–195 (VGNGISIIIFAGIVAGIPQTI), 214–234 (IIKVVVILVAILAIVVGVIFI), 262–282 (LPLKVNPAGVIPVIFAVAFIT), 309–329 (PVGMGVYAALIIAFTYFYAFV), 369–389 (FVGSIFLAVIAILPVLFVNIA), and 390–410 (GLPSSAQIGGTSLLIVIGVAL).

Belongs to the SecY/SEC61-alpha family. As to quaternary structure, component of the Sec protein translocase complex. Heterotrimer consisting of SecY, SecE and SecG subunits. The heterotrimers can form oligomers, although 1 heterotrimer is thought to be able to translocate proteins. Interacts with the ribosome. Interacts with SecDF, and other proteins may be involved. Interacts with SecA.

The protein resides in the cell membrane. Functionally, the central subunit of the protein translocation channel SecYEG. Consists of two halves formed by TMs 1-5 and 6-10. These two domains form a lateral gate at the front which open onto the bilayer between TMs 2 and 7, and are clamped together by SecE at the back. The channel is closed by both a pore ring composed of hydrophobic SecY resides and a short helix (helix 2A) on the extracellular side of the membrane which forms a plug. The plug probably moves laterally to allow the channel to open. The ring and the pore may move independently. The polypeptide is Protein translocase subunit SecY (Bacillus licheniformis (strain ATCC 14580 / DSM 13 / JCM 2505 / CCUG 7422 / NBRC 12200 / NCIMB 9375 / NCTC 10341 / NRRL NRS-1264 / Gibson 46)).